Consider the following 429-residue polypeptide: Phosphoribosylamine--glycine ligase (429 aa).

One can recognise an ATP-grasp domain in the interval 109–316 (KDFLARHQIP…LVELCLAAID (208 aa)). 135-196 (VREQGAPIVV…EEFLDGEEAS (62 aa)) is a binding site for ATP. Residues 212-234 (SQDHKRVGDKDTGPNTGGMGAYS) are disordered. Residues 213–223 (QDHKRVGDKDT) are compositionally biased toward basic and acidic residues. 2 residues coordinate Mg(2+): E286 and N288.

Belongs to the GARS family. Mg(2+) serves as cofactor. The cofactor is Mn(2+).

The enzyme catalyses 5-phospho-beta-D-ribosylamine + glycine + ATP = N(1)-(5-phospho-beta-D-ribosyl)glycinamide + ADP + phosphate + H(+). The protein operates within purine metabolism; IMP biosynthesis via de novo pathway; N(1)-(5-phospho-D-ribosyl)glycinamide from 5-phospho-alpha-D-ribose 1-diphosphate: step 2/2. This is Phosphoribosylamine--glycine ligase from Vibrio vulnificus (strain CMCP6).